A 105-amino-acid chain; its full sequence is Putative RNA-binding protein RbpF (105 aa).

An RRM domain is found at 2–79; it reads SIYVGNLSYE…RDLKVNKAKP (78 aa). Over residues 75-84 the composition is skewed to basic and acidic residues; that stretch reads NKAKPKEDRG. The disordered stretch occupies residues 75-105; that stretch reads NKAKPKEDRGSFGGGNRGGYGGGGGGGRSRY. Residues 85 to 105 show a composition bias toward gly residues; the sequence is SFGGGNRGGYGGGGGGGRSRY.

The sequence is that of Putative RNA-binding protein RbpF (rbpF) from Nostoc sp. (strain PCC 7120 / SAG 25.82 / UTEX 2576).